The following is a 332-amino-acid chain: Ketol-acid reductoisomerase (NAD(+)) (332 aa).

The KARI N-terminal Rossmann domain occupies Met1–Cys186. NAD(+) contacts are provided by residues Tyr24–Gln27, Glu46, Asn55, Ser57, and Asp87–Gln90. The active site involves His112. NAD(+) is bound at residue Gly138. Residues Thr187 to Lys332 form the KARI C-terminal knotted domain. Residues Asp195, Glu199, Glu231, and Glu235 each contribute to the Mg(2+) site. Ser256 provides a ligand contact to substrate.

The protein belongs to the ketol-acid reductoisomerase family. Homodimer. Mg(2+) serves as cofactor.

It carries out the reaction (2R)-2,3-dihydroxy-3-methylbutanoate + NAD(+) = (2S)-2-acetolactate + NADH + H(+). It functions in the pathway amino-acid biosynthesis; L-isoleucine biosynthesis; L-isoleucine from 2-oxobutanoate: step 2/4. The protein operates within amino-acid biosynthesis; L-valine biosynthesis; L-valine from pyruvate: step 2/4. Functionally, involved in the biosynthesis of branched-chain amino acids (BCAA). Catalyzes an alkyl-migration followed by a ketol-acid reduction of (S)-2-acetolactate (S2AL) to yield (R)-2,3-dihydroxy-isovalerate. In the isomerase reaction, S2AL is rearranged via a Mg-dependent methyl migration to produce 3-hydroxy-3-methyl-2-ketobutyrate (HMKB). In the reductase reaction, this 2-ketoacid undergoes a metal-dependent reduction by NADH to yield (R)-2,3-dihydroxy-isovalerate. This chain is Ketol-acid reductoisomerase (NAD(+)), found in Uncultured archaeon GZfos26G2.